We begin with the raw amino-acid sequence, 83 residues long: Insect toxin 2-13 (83 aa).

An N-terminal signal peptide occupies residues 1–21; that stretch reads MKLLLLLIITASMLIEGLVNA. Positions 22–80 constitute an LCN-type CS-alpha/beta domain; it reads DVYIRRHDGCKISCTVNDKYCDNECKSEGGSYGYCYAFGCWCEGLPNDKAWKSETNTCG. Intrachain disulfides connect Cys31/Cys79, Cys35/Cys56, Cys42/Cys61, and Cys46/Cys63. Residue Gly80 is modified to Glycine amide.

The protein belongs to the long (4 C-C) scorpion toxin superfamily. Sodium channel inhibitor family. Beta subfamily. Expressed by the venom gland.

The protein localises to the secreted. In terms of biological role, depressant insect toxins cause a transient contraction paralysis followed by a slow flaccid paralysis. They bind voltage-independently to sodium channels (Nav) and block action potentials, primarily by depolarizing the axonal membrane and suppressing the sodium current. This is Insect toxin 2-13 from Leiurus hebraeus (Hebrew deathstalker scorpion).